The sequence spans 768 residues: C-type polyheme cytochrome OmcC (768 aa).

An N-terminal signal peptide occupies residues 1–23; that stretch reads MSRKVTKYSAVLAVSLFAAALAG. Cysteine 24 is lipidated: N-palmitoyl cysteine. Residue cysteine 24 is the site of S-diacylglycerol cysteine attachment. The heme c site is built by cysteine 48, cysteine 51, histidine 52, cysteine 80, cysteine 83, histidine 84, cysteine 112, cysteine 115, histidine 116, cysteine 148, cysteine 151, histidine 152, cysteine 193, cysteine 196, histidine 197, cysteine 238, cysteine 241, histidine 242, cysteine 320, cysteine 323, histidine 324, cysteine 405, cysteine 408, histidine 409, cysteine 454, cysteine 457, histidine 458, cysteine 504, cysteine 507, histidine 508, cysteine 579, cysteine 582, histidine 583, cysteine 611, cysteine 614, and histidine 615.

In terms of processing, binds 12 heme c groups per subunit.

The protein resides in the cell outer membrane. In terms of biological role, not involved in Fe(3+) reduction. This chain is C-type polyheme cytochrome OmcC (omcC), found in Geobacter sulfurreducens (strain ATCC 51573 / DSM 12127 / PCA).